The primary structure comprises 276 residues: Large ribosomal subunit protein uL2 (276 aa).

Positions 218-255 are disordered; the sequence is PTVRGSAMNPCDHPHGGGEGRTPIGMSSPVTPWGKPAL.

The protein belongs to the universal ribosomal protein uL2 family. In terms of assembly, part of the 50S ribosomal subunit. Forms a bridge to the 30S subunit in the 70S ribosome.

Functionally, one of the primary rRNA binding proteins. Required for association of the 30S and 50S subunits to form the 70S ribosome, for tRNA binding and peptide bond formation. It has been suggested to have peptidyltransferase activity; this is somewhat controversial. Makes several contacts with the 16S rRNA in the 70S ribosome. This chain is Large ribosomal subunit protein uL2, found in Clostridium tetani (strain Massachusetts / E88).